We begin with the raw amino-acid sequence, 467 residues long: ATP synthase subunit beta (467 aa).

ATP is bound at residue 154–161 (GGAGVGKT).

It belongs to the ATPase alpha/beta chains family. F-type ATPases have 2 components, CF(1) - the catalytic core - and CF(0) - the membrane proton channel. CF(1) has five subunits: alpha(3), beta(3), gamma(1), delta(1), epsilon(1). CF(0) has three main subunits: a(1), b(2) and c(9-12). The alpha and beta chains form an alternating ring which encloses part of the gamma chain. CF(1) is attached to CF(0) by a central stalk formed by the gamma and epsilon chains, while a peripheral stalk is formed by the delta and b chains.

The protein localises to the cell inner membrane. It catalyses the reaction ATP + H2O + 4 H(+)(in) = ADP + phosphate + 5 H(+)(out). Functionally, produces ATP from ADP in the presence of a proton gradient across the membrane. The catalytic sites are hosted primarily by the beta subunits. The polypeptide is ATP synthase subunit beta (Leptospira interrogans serogroup Icterohaemorrhagiae serovar copenhageni (strain Fiocruz L1-130)).